We begin with the raw amino-acid sequence, 383 residues long: Trichodiene synthase (383 aa).

It belongs to the trichodiene synthase family.

The catalysed reaction is (2E,6E)-farnesyl diphosphate = trichodiene + diphosphate. It participates in sesquiterpene biosynthesis; trichothecene biosynthesis. Functionally, TS is a member of the terpene cyclase group of enzymes. It catalyzes the isomerization and cyclization of farnesyl pyro-phosphate to form trichodiene, the first cyclic intermediate in the biosynthetic pathway for trichothecenes. It serves to branch trichothecene biosynthesis from the isoprenoid pathway. The sequence is that of Trichodiene synthase (TRI5) from Gibberella pulicaris.